The sequence spans 390 residues: Phosphopentomutase (390 aa).

Positions 12, 285, 290, 326, 327, and 338 each coordinate Mn(2+).

The protein belongs to the phosphopentomutase family. The cofactor is Mn(2+).

The protein resides in the cytoplasm. It catalyses the reaction 2-deoxy-alpha-D-ribose 1-phosphate = 2-deoxy-D-ribose 5-phosphate. It carries out the reaction alpha-D-ribose 1-phosphate = D-ribose 5-phosphate. Its pathway is carbohydrate degradation; 2-deoxy-D-ribose 1-phosphate degradation; D-glyceraldehyde 3-phosphate and acetaldehyde from 2-deoxy-alpha-D-ribose 1-phosphate: step 1/2. Its function is as follows. Isomerase that catalyzes the conversion of deoxy-ribose 1-phosphate (dRib-1-P) and ribose 1-phosphate (Rib-1-P) to deoxy-ribose 5-phosphate (dRib-5-P) and ribose 5-phosphate (Rib-5-P), respectively. The polypeptide is Phosphopentomutase (Brevibacillus brevis (strain 47 / JCM 6285 / NBRC 100599)).